We begin with the raw amino-acid sequence, 430 residues long: GTPase Obg (430 aa).

Positions 1-158 (MFVDQVKISL…LDVSLELKLL (158 aa)) constitute an Obg domain. The segment at 118–145 (KGGRGGRGNSRFATPRNPAPDFSEKGEP) is disordered. The OBG-type G domain maps to 159–329 (ADVGLVGFPS…LLYAIADKLE (171 aa)). GTP is bound by residues 165–172 (GFPSVGKS), 190–194 (FTTIK), 212–215 (DLPG), 282–285 (NKMD), and 310–312 (STI). The Mg(2+) site is built by Ser-172 and Thr-192. The 79-residue stretch at 352 to 430 (KHTPSQDKFT…ILGGEFEFVE (79 aa)) folds into the OCT domain.

Belongs to the TRAFAC class OBG-HflX-like GTPase superfamily. OBG GTPase family. In terms of assembly, monomer. It depends on Mg(2+) as a cofactor.

Its subcellular location is the cytoplasm. Its function is as follows. An essential GTPase which binds GTP, GDP and possibly (p)ppGpp with moderate affinity, with high nucleotide exchange rates and a fairly low GTP hydrolysis rate. Plays a role in control of the cell cycle, stress response, ribosome biogenesis and in those bacteria that undergo differentiation, in morphogenesis control. The polypeptide is GTPase Obg (Staphylococcus aureus (strain Mu3 / ATCC 700698)).